Consider the following 260-residue polypeptide: Ribosomal RNA small subunit methyltransferase J (260 aa).

S-adenosyl-L-methionine-binding positions include 108-109 (RD), 124-125 (ER), and aspartate 178.

This sequence belongs to the methyltransferase superfamily. RsmJ family.

The protein resides in the cytoplasm. It catalyses the reaction guanosine(1516) in 16S rRNA + S-adenosyl-L-methionine = N(2)-methylguanosine(1516) in 16S rRNA + S-adenosyl-L-homocysteine + H(+). Functionally, specifically methylates the guanosine in position 1516 of 16S rRNA. This is Ribosomal RNA small subunit methyltransferase J from Ectopseudomonas mendocina (strain ymp) (Pseudomonas mendocina).